The chain runs to 117 residues: Large ribosomal subunit protein uL18 (117 aa).

This sequence belongs to the universal ribosomal protein uL18 family. In terms of assembly, part of the 50S ribosomal subunit; part of the 5S rRNA/L5/L18/L25 subcomplex. Contacts the 5S and 23S rRNAs.

Functionally, this is one of the proteins that bind and probably mediate the attachment of the 5S RNA into the large ribosomal subunit, where it forms part of the central protuberance. This is Large ribosomal subunit protein uL18 from Serratia proteamaculans (strain 568).